Consider the following 310-residue polypeptide: MKKALVIRFLAGIYYIQDLDNQTILKAQKKGVLKKSNFIQDNQLKNNRDKMSIKVGDIVLYGMCYDKYLIYAILPRKNELKRPNIANIDQVLLVFSLVKPHFQTLLLDKFLLILQQHKLDVILVFSKIDLIEKEELEEIQQNMNYYFPFYTCYYVDSKQQIGIGVLKNIFEQKITVLAGQTGVGKSTLLKALIPDANLKTQEISESLGRGKHTTKNAQLYLFNNGFIADTPGFSKLDLGGFSYQNLKNFYPDFLKYVDNCYFGTNCLHLQETQCGVKEALTQGKIIPSRYSNYCYFMEEIKKEKKIYVKN.

In terms of domain architecture, CP-type G spans 77 to 236 (KNELKRPNIA…IADTPGFSKL (160 aa)). GTP contacts are provided by residues 126–129 (SKID) and 179–187 (GQTGVGKST). Residues Cys260, Cys266, His268, and Cys274 each contribute to the Zn(2+) site.

This sequence belongs to the TRAFAC class YlqF/YawG GTPase family. RsgA subfamily. Monomer. Associates with 30S ribosomal subunit, binds 16S rRNA. It depends on Zn(2+) as a cofactor.

The protein resides in the cytoplasm. In terms of biological role, one of several proteins that assist in the late maturation steps of the functional core of the 30S ribosomal subunit. Helps release RbfA from mature subunits. May play a role in the assembly of ribosomal proteins into the subunit. Circularly permuted GTPase that catalyzes slow GTP hydrolysis, GTPase activity is stimulated by the 30S ribosomal subunit. The chain is Small ribosomal subunit biogenesis GTPase RsgA from Phytoplasma australiense.